An 88-amino-acid polypeptide reads, in one-letter code: Histone H2A-beta, sperm (88 aa).

Belongs to the histone H2A family. As to quaternary structure, the nucleosome is a histone octamer containing two molecules each of H2A, H2B, H3 and H4 assembled in one H3-H4 heterotetramer and two H2A-H2B heterodimers. The octamer wraps approximately 147 bp of DNA. Monoubiquitination in C-terminus gives a specific tag for epigenetic transcriptional repression.

Its subcellular location is the nucleus. It localises to the chromosome. In terms of biological role, core component of nucleosome. Nucleosomes wrap and compact DNA into chromatin, limiting DNA accessibility to the cellular machineries which require DNA as a template. Histones thereby play a central role in transcription regulation, DNA repair, DNA replication and chromosomal stability. DNA accessibility is regulated via a complex set of post-translational modifications of histones, also called histone code, and nucleosome remodeling. This chain is Histone H2A-beta, sperm, found in Strongylocentrotus purpuratus (Purple sea urchin).